Reading from the N-terminus, the 221-residue chain is U1 small nuclear ribonucleoprotein C (221 aa).

The Matrin-type zinc-finger motif lies at tyrosine 4–valine 36. The tract at residues serine 100 to proline 168 is disordered. The segment covering alanine 134 to proline 166 has biased composition (pro residues).

Belongs to the U1 small nuclear ribonucleoprotein C family. U1 snRNP is composed of the 7 core Sm proteins B/B', D1, D2, D3, E, F and G that assemble in a heptameric protein ring on the Sm site of the small nuclear RNA to form the core snRNP, and at least 3 U1 snRNP-specific proteins U1-70K, U1-A and U1-C. U1-C interacts with U1 snRNA and the 5' splice-site region of the pre-mRNA.

The protein localises to the nucleus. Functionally, component of the spliceosomal U1 snRNP, which is essential for recognition of the pre-mRNA 5' splice-site and the subsequent assembly of the spliceosome. U1-C is directly involved in initial 5' splice-site recognition for both constitutive and regulated alternative splicing. The interaction with the 5' splice-site seems to precede base-pairing between the pre-mRNA and the U1 snRNA. Stimulates commitment or early (E) complex formation by stabilizing the base pairing of the 5' end of the U1 snRNA and the 5' splice-site region. In Branchiostoma floridae (Florida lancelet), this protein is U1 small nuclear ribonucleoprotein C.